The chain runs to 619 residues: Kinesin light chain 4 (619 aa).

N-acetylserine is present on S2. A coiled-coil region spans residues 32–150; sequence GLESLHSEHQ…EEEKKHLEFL (119 aa). A TPR 1 repeat occupies 55 to 88; the sequence is QQGGHEEGLVHEKARQLRRSMENIELGLSEAQVM. Residues 156–175 show a composition bias toward basic and acidic residues; it reads YDEDGHSMEEKEGDASKDSL. The interval 156–200 is disordered; it reads YDEDGHSMEEKEGDASKDSLDDLFPNEEEEDSSNDLSRGQGAAAA. A Phosphoserine modification is found at S174. Residues 179-188 are compositionally biased toward acidic residues; the sequence is FPNEEEEDSS. 5 TPR repeats span residues 211–244, 253–286, 295–328, 337–370, and 379–412; these read LRTL…LERT, ATML…REST, AATL…REKV, AKQL…YERQ, and ARTK…AHVQ. S460 is subject to Phosphoserine. The stretch at 464-497 is one TPR 7 repeat; the sequence is NTTLRNLGALYRRQGKLEAAETLEECALRSRKQG. A phosphoserine mark is found at S565, S566, and S590. The segment at 571-619 is disordered; that stretch reads RKLQGTEPRPSSSNMKRAASLNYLNQPNAAPLQTSRGLSASTVDLSSSS. A compositionally biased stretch (polar residues) spans 592 to 608; it reads NYLNQPNAAPLQTSRGL. Residues 609 to 619 show a composition bias toward low complexity; the sequence is SASTVDLSSSS. T612 carries the post-translational modification Phosphothreonine.

This sequence belongs to the kinesin light chain family. As to quaternary structure, oligomeric complex composed of two heavy chains and two light chains.

The protein resides in the cytoplasm. It is found in the cytoskeleton. Functionally, kinesin is a microtubule-associated force-producing protein that may play a role in organelle transport. The light chain may function in coupling of cargo to the heavy chain or in the modulation of its ATPase activity. In Rattus norvegicus (Rat), this protein is Kinesin light chain 4 (Klc4).